Consider the following 318-residue polypeptide: Methionyl-tRNA formyltransferase (318 aa).

(6S)-5,6,7,8-tetrahydrofolate is bound at residue 112-115; sequence SILP.

The protein belongs to the Fmt family.

It carries out the reaction L-methionyl-tRNA(fMet) + (6R)-10-formyltetrahydrofolate = N-formyl-L-methionyl-tRNA(fMet) + (6S)-5,6,7,8-tetrahydrofolate + H(+). In terms of biological role, attaches a formyl group to the free amino group of methionyl-tRNA(fMet). The formyl group appears to play a dual role in the initiator identity of N-formylmethionyl-tRNA by promoting its recognition by IF2 and preventing the misappropriation of this tRNA by the elongation apparatus. The protein is Methionyl-tRNA formyltransferase of Shewanella baltica (strain OS185).